A 212-amino-acid polypeptide reads, in one-letter code: Large ribosomal subunit protein uL3 (212 aa).

The residue at position 153 (Gln153) is an N5-methylglutamine.

The protein belongs to the universal ribosomal protein uL3 family. In terms of assembly, part of the 50S ribosomal subunit. Forms a cluster with proteins L14 and L19. Post-translationally, methylated by PrmB.

In terms of biological role, one of the primary rRNA binding proteins, it binds directly near the 3'-end of the 23S rRNA, where it nucleates assembly of the 50S subunit. The sequence is that of Large ribosomal subunit protein uL3 from Shewanella sediminis (strain HAW-EB3).